The following is a 294-amino-acid chain: Cytidine deaminase (294 aa).

CMP/dCMP-type deaminase domains follow at residues 48–168 (NDDE…FGPK) and 187–294 (DNTS…RVTL). 89-91 (NME) contributes to the substrate binding site. H102 is a binding site for Zn(2+). Catalysis depends on E104, which acts as the Proton donor. Residues C129 and C132 each contribute to the Zn(2+) site.

This sequence belongs to the cytidine and deoxycytidylate deaminase family. As to quaternary structure, homodimer. Zn(2+) is required as a cofactor.

The enzyme catalyses cytidine + H2O + H(+) = uridine + NH4(+). It carries out the reaction 2'-deoxycytidine + H2O + H(+) = 2'-deoxyuridine + NH4(+). Its function is as follows. This enzyme scavenges exogenous and endogenous cytidine and 2'-deoxycytidine for UMP synthesis. The polypeptide is Cytidine deaminase (Proteus mirabilis (strain HI4320)).